The following is a 235-amino-acid chain: MKIIQVADQNEGGKVAVEILRSKLAEGAKTLGLATGSSPLSFYKELIESDIDLSDLVSVNLDEYVGLEADDPQSYHYFMNENLFSHKPFKKSFLPNGKAEDAEEETEDYNRILSENPVDFQILGIGTNGHIGFNEPGTSFDSQTHLVDLTPSTIEANARFFETIDQVPTQAISMGIANIMAAKSIVLFAYGKGKAQAIAGTVAGPVTEELPASVLQGHEDVTIIADAEALSLLDN.

Asp62 serves as the catalytic Proton acceptor; for enolization step. The For ring-opening step role is filled by Asn128. His130 serves as the catalytic Proton acceptor; for ring-opening step. Residue Glu135 is the For ring-opening step of the active site.

This sequence belongs to the glucosamine/galactosamine-6-phosphate isomerase family. NagB subfamily.

It carries out the reaction alpha-D-glucosamine 6-phosphate + H2O = beta-D-fructose 6-phosphate + NH4(+). The protein operates within amino-sugar metabolism; N-acetylneuraminate degradation; D-fructose 6-phosphate from N-acetylneuraminate: step 5/5. Catalyzes the reversible isomerization-deamination of glucosamine 6-phosphate (GlcN6P) to form fructose 6-phosphate (Fru6P) and ammonium ion. In Streptococcus gordonii (strain Challis / ATCC 35105 / BCRC 15272 / CH1 / DL1 / V288), this protein is Glucosamine-6-phosphate deaminase.